The chain runs to 225 residues: UPF0758 protein XC_3944 (225 aa).

In terms of domain architecture, MPN spans 102 to 224; it reads ALSDPSSVGR…PVSLAERGWV (123 aa). Zn(2+) contacts are provided by H173, H175, and D186. The JAMM motif motif lies at 173-186; the sequence is HNHPSGNPEPSEAD.

It belongs to the UPF0758 family.

In Xanthomonas campestris pv. campestris (strain 8004), this protein is UPF0758 protein XC_3944.